A 168-amino-acid polypeptide reads, in one-letter code: Acetolactate synthase small subunit (168 aa).

Positions 7-82 (TLSVLVEDKP…VIKIVEQDDE (76 aa)) constitute an ACT domain.

It belongs to the acetolactate synthase small subunit family. Dimer of large and small chains.

It catalyses the reaction 2 pyruvate + H(+) = (2S)-2-acetolactate + CO2. It participates in amino-acid biosynthesis; L-isoleucine biosynthesis; L-isoleucine from 2-oxobutanoate: step 1/4. The protein operates within amino-acid biosynthesis; L-valine biosynthesis; L-valine from pyruvate: step 1/4. In Mycobacterium bovis (strain ATCC BAA-935 / AF2122/97), this protein is Acetolactate synthase small subunit (ilvH).